The sequence spans 478 residues: Ribulose bisphosphate carboxylase large chain (478 aa).

A propeptide spanning residues 1 to 2 is cleaved from the precursor; that stretch reads MS. An N-acetylproline modification is found at proline 3. An N6,N6,N6-trimethyllysine modification is found at lysine 14. Residues asparagine 123 and threonine 173 each coordinate substrate. The Proton acceptor role is filled by lysine 175. Lysine 177 provides a ligand contact to substrate. Residues lysine 201, aspartate 203, and glutamate 204 each coordinate Mg(2+). N6-carboxylysine is present on lysine 201. Histidine 294 acts as the Proton acceptor in catalysis. Residues arginine 295, histidine 327, and serine 379 each coordinate substrate.

Belongs to the RuBisCO large chain family. Type I subfamily. In terms of assembly, heterohexadecamer of 8 large chains and 8 small chains; disulfide-linked. The disulfide link is formed within the large subunit homodimers. Mg(2+) serves as cofactor. The disulfide bond which can form in the large chain dimeric partners within the hexadecamer appears to be associated with oxidative stress and protein turnover.

Its subcellular location is the plastid. The protein localises to the chloroplast. The catalysed reaction is 2 (2R)-3-phosphoglycerate + 2 H(+) = D-ribulose 1,5-bisphosphate + CO2 + H2O. It catalyses the reaction D-ribulose 1,5-bisphosphate + O2 = 2-phosphoglycolate + (2R)-3-phosphoglycerate + 2 H(+). In terms of biological role, ruBisCO catalyzes two reactions: the carboxylation of D-ribulose 1,5-bisphosphate, the primary event in carbon dioxide fixation, as well as the oxidative fragmentation of the pentose substrate in the photorespiration process. Both reactions occur simultaneously and in competition at the same active site. This is Ribulose bisphosphate carboxylase large chain from Neurachne munroi.